A 334-amino-acid chain; its full sequence is Probable fructose-bisphosphate aldolase class 1 (334 aa).

It belongs to the class I fructose-bisphosphate aldolase family.

The enzyme catalyses beta-D-fructose 1,6-bisphosphate = D-glyceraldehyde 3-phosphate + dihydroxyacetone phosphate. It participates in carbohydrate degradation; glycolysis; D-glyceraldehyde 3-phosphate and glycerone phosphate from D-glucose: step 4/4. This Xanthomonas campestris pv. campestris (strain ATCC 33913 / DSM 3586 / NCPPB 528 / LMG 568 / P 25) protein is Probable fructose-bisphosphate aldolase class 1.